Consider the following 650-residue polypeptide: Serine/threonine-protein phosphatase with EF-hands 1 (650 aa).

Positions Val-16–Phe-45 constitute an IQ domain. Residues Ile-124–Ser-456 are catalytic. 4 residues coordinate Mn(2+): Asp-175, His-177, Asp-204, and Asn-236. His-237 (proton donor) is an active-site residue. His-288 contacts Mn(2+). The disordered stretch occupies residues Pro-315 to Asp-348. The segment covering Glu-335 to Asp-348 has biased composition (basic and acidic residues). A Mn(2+)-binding site is contributed by His-404. EF-hand domains follow at residues Ser-484–Leu-519, Arg-567–His-602, and Ile-607–Tyr-642. Asp-497, Ser-499, Ser-501, Arg-503, Glu-508, Asp-580, Asp-582, Ser-584, Glu-591, Asp-620, Asn-622, Asp-624, Asn-626, and Glu-631 together coordinate Ca(2+).

This sequence belongs to the PPP phosphatase family. It depends on Mn(2+) as a cofactor. Requires Mg(2+) as cofactor. In terms of tissue distribution, in the embryo it is almost exclusively expressed in the peripheral nervous system, within sensory neurons of cranial and dorsal root ganglia. Otherwise found in fetal inner ear and a small group of neurons in the midbrain/pons junction.

The enzyme catalyses O-phospho-L-seryl-[protein] + H2O = L-seryl-[protein] + phosphate. The catalysed reaction is O-phospho-L-threonyl-[protein] + H2O = L-threonyl-[protein] + phosphate. Activated by calcium. Functionally, may have a role in the recovery or adaptation response of photoreceptors. May have a role in diverse sensory neurons and in development. This chain is Serine/threonine-protein phosphatase with EF-hands 1 (Ppef1), found in Mus musculus (Mouse).